The chain runs to 205 residues: Metal-independent carbonic anhydrase (205 aa).

The signal sequence occupies residues 1–24 (MNLFKPRILVLFAATALISGIAIV). Residues T106 and Y124 each coordinate hydrogencarbonate.

This sequence belongs to the iota-class carbonic anhydrase family. Homotetramer; dimer of dimers. Does not require a metal cofactor. serves as cofactor.

It catalyses the reaction hydrogencarbonate + H(+) = CO2 + H2O. Activity is not affected by EDTA or 2,6-pyridinedicarboxylic acid (PDA). Activity is not affected by addition of most divalent metal ions, except zinc ions which decrease the activity. Inhibited by the iodide ion. Functionally, catalyzes the hydration of carbon dioxide (CO2) to bicarbonate (HCO3(-)). Has only very low bicarbonate dehydration activity. May function even in metal-poor environments. This chain is Metal-independent carbonic anhydrase, found in Nostoc sp. (strain PCC 7120 / SAG 25.82 / UTEX 2576).